Consider the following 480-residue polypeptide: MAVTRIGLAGLAVMGQNLALNIAEKGFPISVYNRTTSKVDETVQRAKVEGNLPVYGFHDPASFVNSIQKPRVVIMLVKAGAPVDQTIATLAAHLEQGDCIIDGGNEWYENTERREKAMEERGLLYLGMGVSGGEEGARNGPSLMPGGSFEAYKYIEDILLKVAAQVPDSGPCVTYIGKGGSGNFVKMVHNGIEYGDMQLISEAYDVLKSVGKLTNSELQQVFSEWNKGELLSFLIEITADIFSIKDDQGSGHLVDKVLDKTGMKGTGKWTVQQAAELSVAAPTIEASLDSRFLSGLKDERVEAAKVFQGDFSSNLPVDKAQLIEDVRQALYASKICSYAQGMNIIKAKSMEKGWSLNLGELARIWKGGCIIRAIFLDRIKKAYDRNSDLANLLVDPEFAQEIMDRQAAWRRVVCLAINNGVSTPGMSASLAYFDSYRRDRLPANLVQAQRDYFGAHTYERVDMPGSFHTEWFKIARAAKM.

Residues Gly-10–Gly-15, Asn-33–Thr-35, Val-77–Ala-79, and Asn-105 each bind NADP(+). Substrate is bound by residues Asn-105 and Ser-131–Gly-133. The active-site Proton acceptor is Lys-186. Residue His-189–Asn-190 participates in substrate binding. Glu-193 (proton donor) is an active-site residue. The substrate site is built by Tyr-194, Lys-264, Arg-291, Arg-450, and His-456.

The protein belongs to the 6-phosphogluconate dehydrogenase family. As to quaternary structure, homodimer. In terms of tissue distribution, highly expressed in inflorescence, lowly expressed in root and embryos and almost absent in leaves.

The protein resides in the cytoplasm. It carries out the reaction 6-phospho-D-gluconate + NADP(+) = D-ribulose 5-phosphate + CO2 + NADPH. Its pathway is carbohydrate degradation; pentose phosphate pathway; D-ribulose 5-phosphate from D-glucose 6-phosphate (oxidative stage): step 3/3. Functionally, catalyzes the oxidative decarboxylation of 6-phosphogluconate to ribulose 5-phosphate and CO(2), with concomitant reduction of NADP to NADPH. The sequence is that of 6-phosphogluconate dehydrogenase, decarboxylating 1 (G6PGH1) from Oryza sativa subsp. japonica (Rice).